The sequence spans 168 residues: Ribosome maturation factor RimM (168 aa).

Residues 95–168 (KEGDYYWTDL…IIVVEWDADF (74 aa)) enclose the PRC barrel domain.

This sequence belongs to the RimM family. Binds ribosomal protein uS19.

Its subcellular location is the cytoplasm. An accessory protein needed during the final step in the assembly of 30S ribosomal subunit, possibly for assembly of the head region. Essential for efficient processing of 16S rRNA. May be needed both before and after RbfA during the maturation of 16S rRNA. It has affinity for free ribosomal 30S subunits but not for 70S ribosomes. This is Ribosome maturation factor RimM from Coxiella burnetii (strain CbuK_Q154) (Coxiella burnetii (strain Q154)).